Consider the following 333-residue polypeptide: Ribonucleoside-diphosphate reductase small chain B (333 aa).

3 residues coordinate Fe cation: Asp76, Glu107, and His110. Tyr114 is a catalytic residue. 3 residues coordinate Fe cation: Glu169, Glu203, and His206.

It belongs to the ribonucleoside diphosphate reductase small chain family. Heterodimer of a large and a small chain. Requires Fe cation as cofactor. Expressed in roots, rosette leaves, stems and flowers.

Its subcellular location is the cytoplasm. It carries out the reaction a 2'-deoxyribonucleoside 5'-diphosphate + [thioredoxin]-disulfide + H2O = a ribonucleoside 5'-diphosphate + [thioredoxin]-dithiol. Its function is as follows. Provides the precursors necessary for DNA synthesis. Catalyzes the biosynthesis of deoxyribonucleotides from the corresponding ribonucleotides. The protein is Ribonucleoside-diphosphate reductase small chain B (RNR2B) of Arabidopsis thaliana (Mouse-ear cress).